The sequence spans 371 residues: Ribosomal RNA small subunit methyltransferase H (371 aa).

Residues G43 to H45, D62, L96, D110, and Q117 contribute to the S-adenosyl-L-methionine site. Residues A315–D371 form a disordered region. Positions T360–D371 are enriched in acidic residues.

This sequence belongs to the methyltransferase superfamily. RsmH family.

It is found in the cytoplasm. It catalyses the reaction cytidine(1402) in 16S rRNA + S-adenosyl-L-methionine = N(4)-methylcytidine(1402) in 16S rRNA + S-adenosyl-L-homocysteine + H(+). Functionally, specifically methylates the N4 position of cytidine in position 1402 (C1402) of 16S rRNA. The polypeptide is Ribosomal RNA small subunit methyltransferase H (Salinispora tropica (strain ATCC BAA-916 / DSM 44818 / JCM 13857 / NBRC 105044 / CNB-440)).